Reading from the N-terminus, the 281-residue chain is Cytochrome bc1 complex cytochrome c subunit (281 aa).

The helical transmembrane segment at 17–37 (AAGAMALAVGLTGAGILVNAV) threads the bilayer. 2 consecutive Cytochrome c domains span residues 52-132 (ALIQ…EANG) and 162-240 (ADVA…KSAK). C65, C68, H69, C175, C178, and H179 together coordinate heme c. Residues 259-279 (GMMMWLVGIVVLVAAAMWIGS) form a helical membrane-spanning segment.

The cytochrome bc1 complex is composed of a cytochrome b (QcrB), the Rieske iron-sulfur protein (QcrA) and a diheme cytochrome c (QcrC) subunit. The bc1 complex forms a supercomplex with cytochrome c oxidase (cytochrome aa3). Binds 2 heme c groups covalently per subunit.

The protein resides in the cell membrane. It carries out the reaction a quinol + 2 Fe(III)-[cytochrome c](out) = a quinone + 2 Fe(II)-[cytochrome c](out) + 2 H(+)(out). In terms of biological role, cytochrome c1 subunit of the cytochrome bc1 complex, an essential component of the respiratory electron transport chain required for ATP synthesis. The bc1 complex catalyzes the oxidation of menaquinol and the reduction of cytochrome c in the respiratory chain. The bc1 complex operates through a Q-cycle mechanism that couples electron transfer to generation of the proton gradient that drives ATP synthesis. In Corynebacterium diphtheriae (strain ATCC 700971 / NCTC 13129 / Biotype gravis), this protein is Cytochrome bc1 complex cytochrome c subunit (qcrC).